The sequence spans 549 residues: Protein wntless homolog (549 aa).

Positions 1 to 34 (MAGGAVIENLSNRKLFVIFAGLLVIQIMFFLIGA) are cleaved as a signal peptide. Topologically, residues 36 to 236 (YAPSPSSYME…RLIEIHQNGG (201 aa)) are lumenal. The helical transmembrane segment at 237–257 (FTLVWLWTKTFMTPVVAICLW) threads the bilayer. Residues 258-275 (WYYNRINQLARNPLLLER) are Cytoplasmic-facing. Residues 276 to 296 (AILLLGLSLVILDFPIEWISL) form a helical membrane-spanning segment. Topologically, residues 297–310 (TYRIPFLLLISDLR) are lumenal. The chain crosses the membrane as a helical span at residues 311–331 (QGLFYTVLFSFWLIFAGEHLI). Over 332 to 345 (DDNTRNNLKSYRFN) the chain is Cytoplasmic. A helical membrane pass occupies residues 346 to 366 (LSFIITASLGLLIYDLIERGI). At 367–383 (QLYDPFYSVWSSPTGSQ) the chain is on the lumenal side. A helical transmembrane segment spans residues 384 to 404 (IAYFAIFISAISTVAYFIFLF). The Cytoplasmic segment spans residues 405–439 (FKIARVWSTIKSKRSAQIYQTSENRRLKVEGVIYR). Residues 440–460 (FKFLMLFTLLCSAFTIAAYFM) traverse the membrane as a helical segment. The Lumenal segment spans residues 461 to 483 (KQYGEAQLHGDEARDGFLTGSTS). The helical transmembrane segment at 484-504 (AFFTGAFGMCNIYVLLLLAMY) threads the bilayer. Over 505–549 (APSHKHYRGASQLIDENDDDEIMEDPSNQHTESNAMTTFLKPSTD) the chain is Cytoplasmic. A disordered region spans residues 524–549 (DEIMEDPSNQHTESNAMTTFLKPSTD). Over residues 530–549 (PSNQHTESNAMTTFLKPSTD) the composition is skewed to polar residues.

It belongs to the wntless family. In terms of tissue distribution, expressed in the tail hypodermis, stomatointestinal muscle, the mesoblast cell M and its descendants, CAN neurons, the developing vulva, the pharynx and the pharyngeal intestinal valve.

Its subcellular location is the cell membrane. It localises to the early endosome membrane. The protein resides in the golgi apparatus membrane. The protein localises to the basal cell membrane. It is found in the late endosome membrane. Probable sorting receptor which regulates endocytosis and secretion of the wnt ligand egl-20. Recycling of mig-14 from the plasma membrane to the Golgi apparatus by the retromer complex is essential for its function. Its endosomal trafficking is regulated by its association with sorting nexin snx-3 on early endosomes and the mtm-6/mtm-9 myotubularin complex. Required in embryonic development for endoderm specification and the correct positioning and orientation of the mitotic spindles and division planes in blastomere cells. Functions during vulval development, playing a role in vulval precursor cell fate specification. During development, specifically regulates the migration of HSN neurons, the left Q neuroblast (QL) and its descendants and the distal tip cells of the gonads. Positioning of Q neuroblasts may be both dependent and independent of hox gene mab-5. Involved in establishing ALM and PLM neuronal cell polarity. The sequence is that of Protein wntless homolog from Caenorhabditis elegans.